Reading from the N-terminus, the 238-residue chain is Purine nucleoside phosphorylase DeoD-type (238 aa).

His-5 is an a purine D-ribonucleoside binding site. Phosphate-binding positions include Gly-21, Arg-25, Arg-44, and 88-91 (RIGS). A purine D-ribonucleoside-binding positions include 180–182 (EME) and 204–205 (SD). Asp-205 functions as the Proton donor in the catalytic mechanism.

It belongs to the PNP/UDP phosphorylase family. Homohexamer; trimer of homodimers.

It catalyses the reaction a purine D-ribonucleoside + phosphate = a purine nucleobase + alpha-D-ribose 1-phosphate. The catalysed reaction is a purine 2'-deoxy-D-ribonucleoside + phosphate = a purine nucleobase + 2-deoxy-alpha-D-ribose 1-phosphate. Functionally, catalyzes the reversible phosphorolytic breakdown of the N-glycosidic bond in the beta-(deoxy)ribonucleoside molecules, with the formation of the corresponding free purine bases and pentose-1-phosphate. The sequence is that of Purine nucleoside phosphorylase DeoD-type from Xenorhabdus nematophila (strain ATCC 19061 / DSM 3370 / CCUG 14189 / LMG 1036 / NCIMB 9965 / AN6).